The chain runs to 147 residues: Large ribosomal subunit protein bL9 (147 aa).

Belongs to the bacterial ribosomal protein bL9 family.

Binds to the 23S rRNA. This is Large ribosomal subunit protein bL9 from Bacteroides fragilis (strain YCH46).